A 257-amino-acid chain; its full sequence is tRNA pseudouridine synthase A (257 aa).

The active-site Nucleophile is the Asp52. Substrate is bound at residue Tyr111.

It belongs to the tRNA pseudouridine synthase TruA family. In terms of assembly, homodimer.

The catalysed reaction is uridine(38/39/40) in tRNA = pseudouridine(38/39/40) in tRNA. In terms of biological role, formation of pseudouridine at positions 38, 39 and 40 in the anticodon stem and loop of transfer RNAs. The protein is tRNA pseudouridine synthase A of Cereibacter sphaeroides (strain ATCC 17025 / ATH 2.4.3) (Rhodobacter sphaeroides).